A 479-amino-acid polypeptide reads, in one-letter code: MYDSSSKIKDLSLAPFGKLQMEISETEMPGIMTIREEYEKLKPFKGAKITGCLHMTIETALLIETLQKLGARIRWCSCNIFSTLDYAAAAVSTLENVSVFAWRGETLEEYWWCVEKALTWGENGEGPDLIVDDGADASYLVHKGAEYEKLYEEKKILPDPESGKNEEERCFLSLIKSSILKNPKKWTNMAKKIIGMSEETTTGVLRVKKIEKNNGLLFTAINVNDSVTKQKYDNIYGCRHSLPDGLMRATDFLISGKIVVICGYGDVGKGCASAMKGLGARVYVTEIDPICAIQAVMEGFNVVTLEEIVEKGDFFITCTGNVDIIKLEHLLKMKNNAVVGNIGHFDDEIQVSDLFNHEGIEIENVKPQVDRVTLPNGNKIIVLAQGRLLNLSCATGHPAFVMSFSFCNQIFAQLELWENRNTGKYEKNKSYILPKELDEKVAFYHLKKLNATLTELDDNQCEFLGVSKTGPFKSEAYRY.

Substrate-binding residues include Thr56, Asp133, and Glu199. 200–202 (TTT) contacts NAD(+). The substrate site is built by Lys229 and Asp233. NAD(+) contacts are provided by residues Asn234, 263–268 (GYGDVG), Glu286, Asn321, 342–344 (IGH), and Asn390.

Belongs to the adenosylhomocysteinase family. Homotetramer. NAD(+) serves as cofactor.

It carries out the reaction S-adenosyl-L-homocysteine + H2O = L-homocysteine + adenosine. It functions in the pathway amino-acid biosynthesis; L-homocysteine biosynthesis; L-homocysteine from S-adenosyl-L-homocysteine: step 1/1. Adenosylhomocysteine is a competitive inhibitor of S-adenosyl-L-methionine-dependent methyl transferase reactions; therefore adenosylhomocysteinase may play a key role in the control of methylations via regulation of the intracellular concentration of adenosylhomocysteine. In Plasmodium yoelii yoelii, this protein is Adenosylhomocysteinase.